The following is a 261-amino-acid chain: Cytochrome c oxidase subunit 3 (261 aa).

The Mitochondrial matrix segment spans residues 1–15 (MAHQAHAYHMVDPSP). The helical transmembrane segment at 16–34 (WPLTGAIAALLLTSGTAVW) threads the bilayer. Residues 35–40 (FHFHSL) are Mitochondrial intermembrane-facing. A helical transmembrane segment spans residues 41-66 (TLLTMGNILLLLTMYQWWRDIIREGT). The Mitochondrial matrix portion of the chain corresponds to 67 to 72 (FQGHHT). Residues 73-105 (PPVQKGLRYGMILFITSEVFFFLGFFWAFYHSS) form a helical membrane-spanning segment. The Mitochondrial intermembrane segment spans residues 106–128 (LSPTPELGGCWPPTGIITLDPFE). A helical transmembrane segment spans residues 129-152 (VPLLNTAVLLASGVTVTWAHHSIM). Over 153–155 (EGE) the chain is Mitochondrial matrix. The helical transmembrane segment at 156–183 (RKQTIQALTLTILLGFYFTFLQGMEYYE) threads the bilayer. Over 184 to 190 (APFTIAD) the chain is Mitochondrial intermembrane. The helical transmembrane segment at 191–223 (GVYGSTFFVATGFHGLHVIIGSTFLAICLLRQI) threads the bilayer. Topologically, residues 224–232 (QYHFTSEHH) are mitochondrial matrix. The helical transmembrane segment at 233–256 (FGFEAAAWYWHFVDVVWLFLYVSI) threads the bilayer. Topologically, residues 257–261 (YWWGS) are mitochondrial intermembrane.

Belongs to the cytochrome c oxidase subunit 3 family. As to quaternary structure, component of the cytochrome c oxidase (complex IV, CIV), a multisubunit enzyme composed of 14 subunits. The complex is composed of a catalytic core of 3 subunits MT-CO1, MT-CO2 and MT-CO3, encoded in the mitochondrial DNA, and 11 supernumerary subunits COX4I, COX5A, COX5B, COX6A, COX6B, COX6C, COX7A, COX7B, COX7C, COX8 and NDUFA4, which are encoded in the nuclear genome. The complex exists as a monomer or a dimer and forms supercomplexes (SCs) in the inner mitochondrial membrane with NADH-ubiquinone oxidoreductase (complex I, CI) and ubiquinol-cytochrome c oxidoreductase (cytochrome b-c1 complex, complex III, CIII), resulting in different assemblies (supercomplex SCI(1)III(2)IV(1) and megacomplex MCI(2)III(2)IV(2)).

It is found in the mitochondrion inner membrane. It carries out the reaction 4 Fe(II)-[cytochrome c] + O2 + 8 H(+)(in) = 4 Fe(III)-[cytochrome c] + 2 H2O + 4 H(+)(out). Its function is as follows. Component of the cytochrome c oxidase, the last enzyme in the mitochondrial electron transport chain which drives oxidative phosphorylation. The respiratory chain contains 3 multisubunit complexes succinate dehydrogenase (complex II, CII), ubiquinol-cytochrome c oxidoreductase (cytochrome b-c1 complex, complex III, CIII) and cytochrome c oxidase (complex IV, CIV), that cooperate to transfer electrons derived from NADH and succinate to molecular oxygen, creating an electrochemical gradient over the inner membrane that drives transmembrane transport and the ATP synthase. Cytochrome c oxidase is the component of the respiratory chain that catalyzes the reduction of oxygen to water. Electrons originating from reduced cytochrome c in the intermembrane space (IMS) are transferred via the dinuclear copper A center (CU(A)) of subunit 2 and heme A of subunit 1 to the active site in subunit 1, a binuclear center (BNC) formed by heme A3 and copper B (CU(B)). The BNC reduces molecular oxygen to 2 water molecules using 4 electrons from cytochrome c in the IMS and 4 protons from the mitochondrial matrix. In Salmo salar (Atlantic salmon), this protein is Cytochrome c oxidase subunit 3 (mt-co3).